We begin with the raw amino-acid sequence, 311 residues long: Methionyl-tRNA formyltransferase (311 aa).

110 to 113 (SLLP) is a (6S)-5,6,7,8-tetrahydrofolate binding site.

The protein belongs to the Fmt family.

It catalyses the reaction L-methionyl-tRNA(fMet) + (6R)-10-formyltetrahydrofolate = N-formyl-L-methionyl-tRNA(fMet) + (6S)-5,6,7,8-tetrahydrofolate + H(+). Attaches a formyl group to the free amino group of methionyl-tRNA(fMet). The formyl group appears to play a dual role in the initiator identity of N-formylmethionyl-tRNA by promoting its recognition by IF2 and preventing the misappropriation of this tRNA by the elongation apparatus. This chain is Methionyl-tRNA formyltransferase, found in Streptococcus pneumoniae serotype 2 (strain D39 / NCTC 7466).